Consider the following 555-residue polypeptide: Cytochrome P450 monooxygenase abl2 (555 aa).

2 helical membrane passes run 38 to 58 (SFDLFSKLAGLALLSFAALFI) and 141 to 161 (VFIGAVAKVGGAVGISMAPLA). Residues asparagine 325 and asparagine 360 are each glycosylated (N-linked (GlcNAc...) asparagine). Cysteine 489 lines the heme pocket.

Belongs to the cytochrome P450 family. Requires heme as cofactor.

The protein localises to the membrane. Its pathway is hormone biosynthesis. Its function is as follows. Cytochrome P450 monooxygenase; part of the gene cluster that mediates the biosynthesis of abscisic acid (ABA), a phytohormone that acts antagonistically toward salicylic acid (SA), jasmonic acid (JA) and ethylene (ETH) signaling, to impede plant defense responses. The first step of the pathway catalyzes the reaction from farnesyl diphosphate to alpha-ionylideneethane performed by the alpha-ionylideneethane synthase abl3 via a three-step reaction mechanism involving 2 neutral intermediates, beta-farnesene and allofarnesene. The cytochrome P450 monooxygenase abl1 might then be involved in the conversion of alpha-ionylideneethane to alpha-ionylideneacetic acid. Alpha-ionylideneacetic acid is further converted to abscisic acid in 2 steps involving the cytochrome P450 monooxygenase abl2 and the short-chain dehydrogenase/reductase abl4, via the intermediates 1'-deoxy-ABA or 1',4'-trans-diol-ABA, depending on the order of action of these 2 enzymes. Abl2 is responsible for the hydroxylation of carbon atom C-1' and abl4 might be involved in the oxidation of the C-4' carbon atom. This Leptosphaeria maculans (strain JN3 / isolate v23.1.3 / race Av1-4-5-6-7-8) (Blackleg fungus) protein is Cytochrome P450 monooxygenase abl2.